We begin with the raw amino-acid sequence, 191 residues long: MIRITEAAQEHFAKLLANQEPGTQIRVFVINPGTPNAECGVSYCPPDAVEANDRKLDFEQLSAYVDEISAPFLDDAEIDFVTDQLGSQLTLKAPNAKMRKVADDAPLIERVEYILQSQINPQLAGHGGRVSLMEITDEGYAILQFGGGCNGCSMVDYTLKEGIEKELLQRFPELKGVRDLTEHQRGDHSYY.

[4Fe-4S] cluster is bound by residues Cys149 and Cys152.

It belongs to the NfuA family. In terms of assembly, homodimer. The cofactor is [4Fe-4S] cluster.

Functionally, involved in iron-sulfur cluster biogenesis. Binds a 4Fe-4S cluster, can transfer this cluster to apoproteins, and thereby intervenes in the maturation of Fe/S proteins. Could also act as a scaffold/chaperone for damaged Fe/S proteins. In Edwardsiella ictaluri (strain 93-146), this protein is Fe/S biogenesis protein NfuA.